Here is a 125-residue protein sequence, read N- to C-terminus: Type-4 ice-structuring protein (125 aa).

Positions 1–20 (MKYTLIAAIVVLALAQGTLA) are cleaved as a signal peptide.

The protein belongs to the apolipoprotein A1/A4/E family.

It localises to the secreted. Its function is as follows. Antifreeze proteins lower the blood freezing point. The chain is Type-4 ice-structuring protein from Gadus morhua (Atlantic cod).